A 146-amino-acid polypeptide reads, in one-letter code: Large ribosomal subunit protein uL24z (146 aa).

2 disordered regions span residues 1–26 (MKYN…SSER) and 121–146 (KAKG…QNVD). Positions 9-18 (SSRRKNRKAH) are enriched in basic residues. Residues 121 to 138 (KAKGRAAADKEKGTKFTS) are compositionally biased toward basic and acidic residues.

Belongs to the universal ribosomal protein uL24 family.

The sequence is that of Large ribosomal subunit protein uL24z (RPL26A) from Arabidopsis thaliana (Mouse-ear cress).